We begin with the raw amino-acid sequence, 967 residues long: E3 ubiquitin-protein ligase arkadia-C (967 aa).

Disordered regions lie at residues 57-175 (QQID…VSSL) and 193-276 (RKRF…SGGM). The span at 112–131 (SSFSDCISSPSSSSHFGDSD) shows a compositional bias: low complexity. Residues 149-160 (GINSTPRTQSAR) show a composition bias toward polar residues. The segment covering 232 to 251 (SSSSSSENDLSSESSSSSST) has biased composition (low complexity). The SUMO interaction motif 1 (SIM) signature appears at 280–284 (VVVIE). The SUMO interaction motif 2 (SIM) motif lies at 305 to 311 (EVEIVTV). The tract at residues 321–343 (LGHPRSHWGQNSQSGRTQEHRTR) is disordered. The SUMO interaction motif 3 (SIM) motif lies at 360 to 364 (VVDLT). Disordered stretches follow at residues 368–452 (DDPT…MPRL), 482–548 (HSHH…LSNN), 629–657 (LHHQ…MDYV), and 669–689 (PSLT…LSTA). The segment covering 385–395 (VSTVSSNTSTS) has biased composition (low complexity). Residues 482–498 (HSHHFPHHHHHHHHHSS) show a composition bias toward basic residues. Positions 629 to 642 (LHHQTSACPHSNPA) are enriched in polar residues. Pro residues predominate over residues 643–654 (SQPPPPPPPPPM). The segment at 880–882 (YPH) is ubiquitin binding. Residues C915 and C918 each coordinate Zn(2+). An RING-type; atypical zinc finger spans residues 915–956 (CTICLSILEEGEDVRRLPCMHLFHQVCVDQWLITNKKCPICR). The ubiquitin binding stretch occupies residues 930–934 (RLPCM). The Zn(2+) site is built by H938 and C941.

It belongs to the Arkadia family. As to quaternary structure, monomer.

Its subcellular location is the nucleus. The protein localises to the cytoplasm. The protein resides in the PML body. The enzyme catalyses S-ubiquitinyl-[E2 ubiquitin-conjugating enzyme]-L-cysteine + [acceptor protein]-L-lysine = [E2 ubiquitin-conjugating enzyme]-L-cysteine + N(6)-ubiquitinyl-[acceptor protein]-L-lysine.. Its pathway is protein modification; protein ubiquitination. Its activity is regulated as follows. Binds free ubiquitin non-covalently via its RING-type zinc finger. Ubiquitin-binding leads to enhance the E3 ubiquitin-protein ligase activity by stabilizing the ubiquitin-conjugating enzyme E2 (donor ubiquitin) in the 'closed' conformation and activating ubiquitin transfer. E3 ubiquitin-protein ligase required for mesoderm patterning during embryonic development. Acts as an enhancer of the transcriptional responses of the smad2/smad3 effectors, which are activated downstream of BMP. Acts by mediating ubiquitination and degradation of SMAD inhibitors such as smad7, inducing their proteasomal degradation and thereby enhancing the transcriptional activity of TGF-beta and BMP. Specifically binds polysumoylated chains via SUMO interaction motifs (SIMs) and mediates ubiquitination of sumoylated substrates. The regulation of the BMP-SMAD signaling is however independent of sumoylation and is not dependent of SUMO interaction motifs (SIMs). This Xenopus laevis (African clawed frog) protein is E3 ubiquitin-protein ligase arkadia-C (rnf111-c).